Here is a 116-residue protein sequence, read N- to C-terminus: Spexin (116 aa).

A signal peptide spans Met-1–Ser-26. Positions Ala-27–Arg-35 are excised as a propeptide. At Gln-49 the chain carries Glutamine amide. 2 consecutive propeptides follow at residues Gly-50–Trp-116 and Pro-74–Trp-116. Basic and acidic residues predominate over residues Phe-53–Ser-73. Residues Phe-53–Thr-80 form a disordered region.

Belongs to the spexin family.

The protein localises to the secreted. Its subcellular location is the extracellular space. The protein resides in the cytoplasmic vesicle. It is found in the secretory vesicle. Functionally, plays a role as a central modulator of cardiovascular and renal function and nociception. Also plays a role in energy metabolism and storage. Inhibits adrenocortical cell proliferation with minor stimulation on corticosteroid release. Its function is as follows. Acts as a ligand for galanin receptors GALR2 and GALR3. Intracerebroventricular administration of the peptide induces an increase in arterial blood pressure, a decrease in both heart rate and renal excretion and delayed natriuresis. Intraventricular administration of the peptide induces antinociceptive activity. Also induces contraction of muscarinic-like stomach smooth muscles. Intraperitoneal administration of the peptide induces a reduction in food consumption and body weight. Inhibits long chain fatty acid uptake into adipocytes. In terms of biological role, intracerebroventricular administration of the peptide induces a decrease in heart rate, but no change in arterial pressure, and an increase in urine flow rate. Intraventricular administration of the peptide induces antinociceptive activity. This Bos taurus (Bovine) protein is Spexin (SPX).